Consider the following 697-residue polypeptide: Polyribonucleotide nucleotidyltransferase (697 aa).

Residues aspartate 490 and aspartate 496 each contribute to the Mg(2+) site. In terms of domain architecture, KH spans 557–616; that stretch reads PKVVTMTIKPEKIRDVIGPGGKKINEIIDETGVKLDIEQDGTIFIGAVDKDAIARARSII. Residues 626-694 form the S1 motif domain; the sequence is GQVYEGKVKR…KQGRVNASHK (69 aa).

The protein belongs to the polyribonucleotide nucleotidyltransferase family. Mg(2+) serves as cofactor.

Its subcellular location is the cytoplasm. It carries out the reaction RNA(n+1) + phosphate = RNA(n) + a ribonucleoside 5'-diphosphate. Involved in mRNA degradation. Catalyzes the phosphorolysis of single-stranded polyribonucleotides processively in the 3'- to 5'-direction. This Staphylococcus saprophyticus subsp. saprophyticus (strain ATCC 15305 / DSM 20229 / NCIMB 8711 / NCTC 7292 / S-41) protein is Polyribonucleotide nucleotidyltransferase.